The sequence spans 226 residues: N-(5'-phosphoribosyl)anthranilate isomerase 2 (226 aa).

The protein belongs to the TrpF family.

It catalyses the reaction N-(5-phospho-beta-D-ribosyl)anthranilate = 1-(2-carboxyphenylamino)-1-deoxy-D-ribulose 5-phosphate. It functions in the pathway amino-acid biosynthesis; L-tryptophan biosynthesis; L-tryptophan from chorismate: step 3/5. This Methanosarcina mazei (strain ATCC BAA-159 / DSM 3647 / Goe1 / Go1 / JCM 11833 / OCM 88) (Methanosarcina frisia) protein is N-(5'-phosphoribosyl)anthranilate isomerase 2 (trpF2).